The chain runs to 424 residues: PDZ and LIM domain protein 7 (424 aa).

A PDZ domain is found at 1–85; that stretch reads MDSFKVVLEG…RLSLSLSRAQ (85 aa). The residue at position 78 (Ser78) is a Phosphoserine. Over residues 81–98 the composition is skewed to polar residues; sequence LSRAQPAQSKPQKVQTPD. Residues 81-221 are disordered; that stretch reads LSRAQPAQSK…HTQPATPTPM (141 aa). A Phosphothreonine modification is found at Thr96. Residues 110–123 are compositionally biased toward basic and acidic residues; it reads SKQRLMEDTEDWRP. The segment covering 174-187 has biased composition (pro residues); sequence EPWPGPTTPSPTSR. Positions 204–221 are enriched in polar residues; that stretch reads KTSTVLTRHTQPATPTPM. LIM zinc-binding domains are found at residues 247–305, 306–365, and 366–424; these read PVCH…VRYA, PSCA…MFGT, and KCRG…FSHV.

As to quaternary structure, binds via its LIM zinc-binding 3 domain (LIM 3) domain to endocytic codes of INSR, but not with those of IGF1R, LDLR, TFRC, or EGFR. Interacts with various PKC isoforms through the LIM zinc-binding domains. Binds to RET in a phosphorylation-independent manner via its LIM zinc-binding 2 domain (LIM 2). Probably part of a complex with SHC and the RET dimer. Interacts with TPM2, TBX4 and TBX5.

It localises to the cytoplasm. Its subcellular location is the cytoskeleton. In terms of biological role, may function as a scaffold on which the coordinated assembly of proteins can occur. May play a role as an adapter that, via its PDZ domain, localizes LIM-binding proteins to actin filaments of both skeletal muscle and nonmuscle tissues. Involved in both of the two fundamental mechanisms of bone formation, direct bone formation (e.g. embryonic flat bones mandible and cranium), and endochondral bone formation (e.g. embryonic long bone development). Plays a role during fracture repair. Involved in BMP6 signaling pathway. This Bos taurus (Bovine) protein is PDZ and LIM domain protein 7 (PDLIM7).